We begin with the raw amino-acid sequence, 130 residues long: Small ribosomal subunit protein uS9 (130 aa).

Residues R109 to R130 form a disordered region. A compositionally biased stretch (basic residues) spans K111–R130.

This sequence belongs to the universal ribosomal protein uS9 family.

The polypeptide is Small ribosomal subunit protein uS9 (Lachnoclostridium phytofermentans (strain ATCC 700394 / DSM 18823 / ISDg) (Clostridium phytofermentans)).